Here is a 378-residue protein sequence, read N- to C-terminus: Ribosomal RNA large subunit methyltransferase G (378 aa).

The protein belongs to the methyltransferase superfamily. RlmG family.

It is found in the cytoplasm. The enzyme catalyses guanosine(1835) in 23S rRNA + S-adenosyl-L-methionine = N(2)-methylguanosine(1835) in 23S rRNA + S-adenosyl-L-homocysteine + H(+). Specifically methylates the guanine in position 1835 (m2G1835) of 23S rRNA. The chain is Ribosomal RNA large subunit methyltransferase G from Escherichia coli O9:H4 (strain HS).